The chain runs to 362 residues: Anthranilate phosphoribosyltransferase (362 aa).

Residues G96, G99–D100, T104, N106–T109, K124–S132, and G136 each bind 5-phospho-alpha-D-ribose 1-diphosphate. G96 provides a ligand contact to anthranilate. S108 serves as a coordination point for Mg(2+). N127 contributes to the anthranilate binding site. R182 is an anthranilate binding site. Positions 240 and 241 each coordinate Mg(2+).

The protein belongs to the anthranilate phosphoribosyltransferase family. As to quaternary structure, homodimer. It depends on Mg(2+) as a cofactor.

It catalyses the reaction N-(5-phospho-beta-D-ribosyl)anthranilate + diphosphate = 5-phospho-alpha-D-ribose 1-diphosphate + anthranilate. It functions in the pathway amino-acid biosynthesis; L-tryptophan biosynthesis; L-tryptophan from chorismate: step 2/5. Its function is as follows. Catalyzes the transfer of the phosphoribosyl group of 5-phosphorylribose-1-pyrophosphate (PRPP) to anthranilate to yield N-(5'-phosphoribosyl)-anthranilate (PRA). This is Anthranilate phosphoribosyltransferase from Rhodococcus opacus (strain B4).